Here is a 249-residue protein sequence, read N- to C-terminus: Triosephosphate isomerase (249 aa).

9–11 (NWK) serves as a coordination point for substrate. His95 (electrophile) is an active-site residue. The active-site Proton acceptor is the Glu165. Substrate contacts are provided by residues Gly171, Ser211, and 232–233 (GG).

The protein belongs to the triosephosphate isomerase family. As to quaternary structure, homodimer.

It is found in the cytoplasm. It carries out the reaction D-glyceraldehyde 3-phosphate = dihydroxyacetone phosphate. It participates in carbohydrate biosynthesis; gluconeogenesis. It functions in the pathway carbohydrate degradation; glycolysis; D-glyceraldehyde 3-phosphate from glycerone phosphate: step 1/1. Functionally, involved in the gluconeogenesis. Catalyzes stereospecifically the conversion of dihydroxyacetone phosphate (DHAP) to D-glyceraldehyde-3-phosphate (G3P). The protein is Triosephosphate isomerase of Chlorobium phaeobacteroides (strain DSM 266 / SMG 266 / 2430).